A 454-amino-acid polypeptide reads, in one-letter code: Probable diacyglycerol O-acyltransferase tgs2 (454 aa).

The Proton acceptor role is filled by His-139.

This sequence belongs to the long-chain O-acyltransferase family.

The catalysed reaction is an acyl-CoA + a 1,2-diacyl-sn-glycerol = a triacyl-sn-glycerol + CoA. The enzyme catalyses a long chain fatty alcohol + a fatty acyl-CoA = a wax ester + CoA. It functions in the pathway glycerolipid metabolism; triacylglycerol biosynthesis. Functionally, catalyzes the terminal and only committed step in triacylglycerol synthesis by using diacylglycerol and fatty acyl CoA as substrates. Required for storage lipid synthesis. In Mycobacterium tuberculosis (strain CDC 1551 / Oshkosh), this protein is Probable diacyglycerol O-acyltransferase tgs2 (tgs2).